A 252-amino-acid polypeptide reads, in one-letter code: Chitooligosaccharide deacetylase (252 aa).

Mg(2+)-binding residues include His61 and His125.

It belongs to the YdjC deacetylase family. ChbG subfamily. Homodimer. The cofactor is Mg(2+).

The protein localises to the cytoplasm. It carries out the reaction N,N'-diacetylchitobiose + H2O = N-acetyl-beta-D-glucosaminyl-(1-&gt;4)-D-glucosamine + acetate. It catalyses the reaction diacetylchitobiose-6'-phosphate + H2O = N'-monoacetylchitobiose-6'-phosphate + acetate. Its pathway is glycan degradation; chitin degradation. Functionally, involved in the degradation of chitin. ChbG is essential for growth on the acetylated chitooligosaccharides chitobiose and chitotriose but is dispensable for growth on cellobiose and chitosan dimer, the deacetylated form of chitobiose. Deacetylation of chitobiose-6-P and chitotriose-6-P is necessary for both the activation of the chb promoter by the regulatory protein ChbR and the hydrolysis of phosphorylated beta-glucosides by the phospho-beta-glucosidase ChbF. Catalyzes the removal of only one acetyl group from chitobiose-6-P to yield monoacetylchitobiose-6-P, the inducer of ChbR and the substrate of ChbF. The chain is Chitooligosaccharide deacetylase from Salmonella schwarzengrund (strain CVM19633).